A 266-amino-acid chain; its full sequence is Apolipoprotein A-I (266 aa).

Positions 1–18 are cleaved as a signal peptide; the sequence is MKAVVLTLAVLFLTGSQA. 2 tandem repeats follow at residues 67–88 and 89–110. Residues 67–266 form a 10 X approximate tandem repeats region; that stretch reads LKLLDNWDSL…EEASKKLNAQ (200 aa). Met109 carries the post-translational modification Methionine sulfoxide. Residues 111 to 121 form a 3; half-length repeat; the sequence is KDVEEMKTKVQ. Repeat copies occupy residues 122 to 143, 144 to 165, 166 to 187, 188 to 209, and 210 to 231. Residues 232-242 form a 9; half-length repeat; it reads PALEDLRQGLL. Copy 10 of the repeat occupies 243–266; the sequence is PVLESFKVSLLSALEEASKKLNAQ.

Belongs to the apolipoprotein A1/A4/E family. As to quaternary structure, homodimer. Interacts with APOA1BP and CLU. Component of a sperm activating protein complex (SPAP), consisting of APOA1, an immunoglobulin heavy chain, an immunoglobulin light chain and albumin. Interacts with NDRG1. Interacts with SCGB3A2. Interacts with NAXE and YJEFN3. In terms of processing, glycosylated. Palmitoylated. Post-translationally, phosphorylation sites are present in the extracellular medium. In terms of tissue distribution, major protein of plasma HDL, also found in chylomicrons.

It is found in the secreted. Its function is as follows. Participates in the reverse transport of cholesterol from tissues to the liver for excretion by promoting cholesterol efflux from tissues and by acting as a cofactor for the lecithin cholesterol acyltransferase (LCAT). As part of the SPAP complex, activates spermatozoa motility. The polypeptide is Apolipoprotein A-I (APOA1) (Carlito syrichta (Philippine tarsier)).